Here is a 90-residue protein sequence, read N- to C-terminus: Putative membrane protein insertion efficiency factor (90 aa).

The protein belongs to the UPF0161 family.

The protein resides in the cell membrane. Functionally, could be involved in insertion of integral membrane proteins into the membrane. The chain is Putative membrane protein insertion efficiency factor from Lactococcus lactis subsp. cremoris (strain MG1363).